Here is a 293-residue protein sequence, read N- to C-terminus: Protein YIF1A (293 aa).

The interval M1 to D27 is disordered. A2 bears the N-acetylalanine mark. The Cytoplasmic portion of the chain corresponds to A2–D138. S12 is modified (phosphoserine). The chain crosses the membrane as a helical span at residues L139–I159. Over Q160–T174 the chain is Lumenal. Residues A175–V195 traverse the membrane as a helical segment. Residues R196–H203 are Cytoplasmic-facing. The helical transmembrane segment at L204–G226 threads the bilayer. Residues S227–G229 lie on the Lumenal side of the membrane. Residues Y230 to L249 form a helical membrane-spanning segment. The Cytoplasmic segment spans residues R250 to Y271. A helical transmembrane segment spans residues L272–V292.

The protein belongs to the YIF1 family. Interacts with YIPF5.

The protein resides in the endoplasmic reticulum membrane. It localises to the golgi apparatus membrane. It is found in the endoplasmic reticulum-Golgi intermediate compartment membrane. Possible role in transport between endoplasmic reticulum and Golgi. This chain is Protein YIF1A (Yif1a), found in Mus musculus (Mouse).